The following is a 1532-amino-acid chain: IgA-specific serine endopeptidase autotransporter (1532 aa).

Positions 1-27 (MKAKRFKINAISLSIFLAYALTPYSEA) are cleaved as a signal peptide. One can recognise a Peptidase S6 domain in the interval 28–322 (ALVRDDVDYQ…NIYKKEFADK (295 aa)). Ser-278 is an active-site residue. 2 disordered regions span residues 979–1136 (GRPV…KDNS) and 1166–1217 (LEDE…NTEL). Residues 989-1004 (AANTASQAQKATQTDG) are compositionally biased toward polar residues. Over residues 1045 to 1101 (EAEKVARQKDEEAKRKAAEIARQQEEARKAAELAAKQKAEAERKARELARQKAEEAS) the composition is skewed to basic and acidic residues. Positions 1107 to 1116 (KPKRRRRRAI) are enriched in basic residues. Over residues 1207-1217 (SDKHPQDNTEL) the composition is skewed to basic and acidic residues. Residues 1280-1532 (ADAEKNSVWM…SGQIKIQIRF (253 aa)) enclose the Autotransporter domain.

Its subcellular location is the periplasm. It localises to the secreted. It is found in the cell surface. The protein localises to the cell outer membrane. It carries out the reaction Cleavage of immunoglobulin A molecules at certain Pro-|-Xaa bonds in the hinge region. No small molecule substrates are known.. This protease is specific for immunoglobulin A. The protein is IgA-specific serine endopeptidase autotransporter (iga) of Neisseria gonorrhoeae.